The sequence spans 293 residues: Probable chromosome 2-partitioning protein ParB (293 aa).

Belongs to the ParB family.

In terms of biological role, involved in chromosome partition. Localize to both poles of the predivisional cell following completion of DNA replication. Binds to the DNA origin of replication. This chain is Probable chromosome 2-partitioning protein ParB (parB2), found in Deinococcus radiodurans (strain ATCC 13939 / DSM 20539 / JCM 16871 / CCUG 27074 / LMG 4051 / NBRC 15346 / NCIMB 9279 / VKM B-1422 / R1).